The sequence spans 224 residues: MTEKSISPSRDIGVVVPDNWTGYELDVFSLPNHYCEDLECVFIPHGVIVDRTERIAHDIMRDIGDNHITVLCVLKGGYRFCTDLVEHIKNLSRNSERFISMRVDFIRLKCYRNDQCMDEMQIIGGEDLAKLSGKNVLIVEDIINTGRTMTALLNQLEKYKPKMVKVASLLVKRSASSNQYRPDYTGFEIPNKFVVGYALDYNEYFRDLHHICIINEKGKNKYKV.

Positions 140 and 141 each coordinate Mg(2+). GMP is bound by residues glutamate 140–threonine 148, lysine 172, phenylalanine 193–valine 194, and aspartate 200. Residue aspartate 200 coordinates Mg(2+).

This sequence belongs to the purine/pyrimidine phosphoribosyltransferase family.

This is Phosphoribosyltransferase domain-containing protein 1 (prtfdc1) from Xenopus laevis (African clawed frog).